The following is a 282-amino-acid chain: 5'-adenylylsulfate reductase-like 2 (282 aa).

The signal sequence occupies residues 1 to 19 (MRWWPALPLLLLAVAVAGA). One can recognise a Thioredoxin domain in the interval 20 to 159 (GDAAPVCTRP…LAAFYNDVSG (140 aa)). N134 is a glycosylation site (N-linked (GlcNAc...) asparagine). Residues 205–225 (AASFVILRLLYLFYPKITAFV) form a helical membrane-spanning segment.

It is found in the membrane. The sequence is that of 5'-adenylylsulfate reductase-like 2 (APRL2) from Oryza sativa subsp. japonica (Rice).